We begin with the raw amino-acid sequence, 606 residues long: Sulfite reductase [NADPH] flavoprotein alpha-component (606 aa).

The Flavodoxin-like domain occupies 68-206 (ITILSASQTG…AAEAWRKEVT (139 aa)). Residues 74–79 (SQTGNA), 121–124 (STQG), and 157–166 (LGDITYEHFA) contribute to the FMN site. The FAD-binding FR-type domain occupies 240–454 (ESPLTATLSV…VEHNDNFRLP (215 aa)). Residues T328, Q362, 392 to 395 (RLYS), 410 to 412 (TVG), Y416, and 425 to 428 (GGAS) contribute to the FAD site. Residues 525 to 526 (SR), 531 to 535 (KVYVQ), and D568 each bind NADP(+). Y606 serves as a coordination point for FAD.

The protein belongs to the NADPH-dependent sulphite reductase flavoprotein subunit CysJ family. This sequence in the N-terminal section; belongs to the flavodoxin family. In the C-terminal section; belongs to the flavoprotein pyridine nucleotide cytochrome reductase family. Alpha(8)-beta(8). The alpha component is a flavoprotein, the beta component is a hemoprotein. Requires FAD as cofactor. FMN serves as cofactor.

It catalyses the reaction hydrogen sulfide + 3 NADP(+) + 3 H2O = sulfite + 3 NADPH + 4 H(+). It functions in the pathway sulfur metabolism; hydrogen sulfide biosynthesis; hydrogen sulfide from sulfite (NADPH route): step 1/1. Functionally, component of the sulfite reductase complex that catalyzes the 6-electron reduction of sulfite to sulfide. This is one of several activities required for the biosynthesis of L-cysteine from sulfate. The flavoprotein component catalyzes the electron flow from NADPH -&gt; FAD -&gt; FMN to the hemoprotein component. The polypeptide is Sulfite reductase [NADPH] flavoprotein alpha-component (Zymomonas mobilis subsp. mobilis (strain ATCC 31821 / ZM4 / CP4)).